Consider the following 181-residue polypeptide: HGPRTase-like protein 2 (181 aa).

Belongs to the purine/pyrimidine phosphoribosyltransferase family. Archaeal HPRT subfamily.

Functionally, may catalyze a purine salvage reaction, the substrate is unknown. The polypeptide is HGPRTase-like protein 2 (Natrialba magadii (strain ATCC 43099 / DSM 3394 / CCM 3739 / CIP 104546 / IAM 13178 / JCM 8861 / NBRC 102185 / NCIMB 2190 / MS3) (Natronobacterium magadii)).